The chain runs to 495 residues: Ectonucleoside triphosphate diphosphohydrolase 2 (495 aa).

Residues 1–4 (MAGK) lie on the Cytoplasmic side of the membrane. Residues 5 to 25 (LVSLVPPLLLAAAGLTGLLLL) form a helical membrane-spanning segment. Residues 26 to 462 (CVPTQDVREP…PGLRKGTHFS (437 aa)) lie on the Extracellular side of the membrane. N-linked (GlcNAc...) asparagine glycosylation occurs at N64. A disulfide bridge connects residues C75 and C99. Residue N129 is glycosylated (N-linked (GlcNAc...) asparagine). The Proton acceptor role is filled by E165. Residue 204-208 (GASTQ) participates in ATP binding. 2 disulfides stabilise this stretch: C242-C284 and C265-C310. Residues N294, N306, and N319 are each glycosylated (N-linked (GlcNAc...) asparagine). 2 disulfide bridges follow: C323–C328 and C377–C399. N-linked (GlcNAc...) asparagine glycans are attached at residues N378 and N443. Residues 463-483 (SWVALLLLFTVLILAALVLLL) traverse the membrane as a helical segment. At 484–495 (RQVRSAKSPGAL) the chain is on the cytoplasmic side.

This sequence belongs to the GDA1/CD39 NTPase family. It depends on Ca(2+) as a cofactor. Mg(2+) serves as cofactor. As to expression, expressed in brain, heart, vas deferens, kidney, skeletal muscle, thymus, lung and spleen. Weak expression in liver.

Its subcellular location is the cell membrane. Its function is as follows. In the nervous system, could hydrolyze ATP and other nucleotides to regulate purinergic neurotransmission. Hydrolyzes ADP only to a marginal extent. This chain is Ectonucleoside triphosphate diphosphohydrolase 2 (Entpd2), found in Rattus norvegicus (Rat).